Consider the following 196-residue polypeptide: Transmembrane protein 126A (196 aa).

Residues 1–34 (MESHKPSTNKDDLIFNIIPRKIKQLPESDRNLLE) lie on the Mitochondrial matrix side of the membrane. The helical transmembrane segment at 35-55 (YGSAYIGLNAAFGGLIANSLF) threads the bilayer. The Mitochondrial intermembrane portion of the chain corresponds to 56–57 (RR). A helical transmembrane segment spans residues 58-78 (ILNVTQARVASSLPMAVIPFL). Residues 79 to 106 (TANLSYHSFVSLPLSTGNLNCEICTTTR) lie on the Mitochondrial matrix side of the membrane. Residues 107 to 127 (GTLVGFVLGGLYPILLAIPVN) form a helical membrane-spanning segment. Residues 128-159 (GGLAARYESSPLPQRGNIFNYWITISKPVFRK) are Mitochondrial intermembrane-facing. Residues 160-176 (MLFPTLLQTAFAAYLGS) form a helical membrane-spanning segment. At 177 to 196 (RQYKLLIKALQLPEPDLEIQ) the chain is on the mitochondrial matrix side.

It belongs to the TMEM126 family. As to quaternary structure, interacts with OXA1L; promoting cotranslational quality control in mitochondria.

Its subcellular location is the mitochondrion inner membrane. In terms of biological role, protein required for the cotranslational protein quality control in the inner membrane of the mitochondria. Associates with newly synthesized polypeptides and may act as a chaperone that cooperates with OXA1L for the insertion of newly synthesized mitochondrial proteins into the inner membrane. Required for the assembly of the ND4 module of mitochondrial complex I. The chain is Transmembrane protein 126A (Tmem126a) from Rattus norvegicus (Rat).